The following is a 376-amino-acid chain: Cytochrome c oxidase subunit 2, mitochondrial (376 aa).

Residues 164-184 form a helical membrane-spanning segment; it reads IFFFLVQILVFVLWVLSRALW. Residues 185–204 lie on the Mitochondrial matrix side of the membrane; that stretch reads CFRSKISPIPQRIVHGTTIE. Residues 205–225 traverse the membrane as a helical segment; that stretch reads ILWTILPSIILMFIAIPSFTL. Over 226 to 376 the chain is Mitochondrial intermembrane; the sequence is LYSMDDVVVD…YGSWVSNQIQ (151 aa). His309, Cys344, Glu346, Cys348, His352, and Met355 together coordinate Cu cation. Position 346 (Glu346) interacts with Mg(2+).

This sequence belongs to the cytochrome c oxidase subunit 2 family. In terms of assembly, component of the cytochrome c oxidase (complex IV, CIV), a multisubunit enzyme composed of a catalytic core of 3 subunits and several supernumerary subunits. The complex exists as a monomer or a dimer and forms supercomplexes (SCs) in the inner mitochondrial membrane with ubiquinol-cytochrome c oxidoreductase (cytochrome b-c1 complex, complex III, CIII). Requires Cu cation as cofactor.

It is found in the mitochondrion inner membrane. It carries out the reaction 4 Fe(II)-[cytochrome c] + O2 + 8 H(+)(in) = 4 Fe(III)-[cytochrome c] + 2 H2O + 4 H(+)(out). Functionally, component of the cytochrome c oxidase, the last enzyme in the mitochondrial electron transport chain which drives oxidative phosphorylation. The respiratory chain contains 3 multisubunit complexes succinate dehydrogenase (complex II, CII), ubiquinol-cytochrome c oxidoreductase (cytochrome b-c1 complex, complex III, CIII) and cytochrome c oxidase (complex IV, CIV), that cooperate to transfer electrons derived from NADH and succinate to molecular oxygen, creating an electrochemical gradient over the inner membrane that drives transmembrane transport and the ATP synthase. Cytochrome c oxidase is the component of the respiratory chain that catalyzes the reduction of oxygen to water. Electrons originating from reduced cytochrome c in the intermembrane space (IMS) are transferred via the dinuclear copper A center (CU(A)) of subunit 2 and heme A of subunit 1 to the active site in subunit 1, a binuclear center (BNC) formed by heme A3 and copper B (CU(B)). The BNC reduces molecular oxygen to 2 water molecules using 4 electrons from cytochrome c in the IMS and 4 protons from the mitochondrial matrix. This Vigna unguiculata (Cowpea) protein is Cytochrome c oxidase subunit 2, mitochondrial (COX2).